The sequence spans 767 residues: DNA topoisomerase 1 (767 aa).

Basic and acidic residues predominate over residues 1-23 (MSGDHLHNDSQIEADFRLNDSHK). The disordered stretch occupies residues 1 to 201 (MSGDHLHNDS…NKKKKPKKEE (201 aa)). Ser2 bears the N-acetylserine mark. Phosphoserine occurs at positions 2 and 10. Basic residues predominate over residues 24–39 (HKDKHKDREHRHKEHK). Residues 40–110 (KDKEKDREKS…DAKIKKEKEN (71 aa)) are compositionally biased toward basic and acidic residues. A Phosphoserine modification is found at Ser59. Lys103 is covalently cross-linked (Glycyl lysine isopeptide (Lys-Gly) (interchain with G-Cter in SUMO2)). Lys105 participates in a covalent cross-link: Glycyl lysine isopeptide (Lys-Gly) (interchain with G-Cter in SUMO); alternate. Lys105 is covalently cross-linked (Glycyl lysine isopeptide (Lys-Gly) (interchain with G-Cter in SUMO2); alternate). Residue Ser114 is modified to Phosphoserine. Lys119 is covalently cross-linked (Glycyl lysine isopeptide (Lys-Gly) (interchain with G-Cter in SUMO); alternate). Residue Lys119 forms a Glycyl lysine isopeptide (Lys-Gly) (interchain with G-Cter in SUMO2); alternate linkage. A Glycyl lysine isopeptide (Lys-Gly) (interchain with G-Cter in SUMO1); alternate cross-link involves residue Lys119. Over residues 131–168 (PKEDIKPLKRPRDEDDADYKPKKIKTEDIKKEKKRKLE) the composition is skewed to basic and acidic residues. Residues Lys136 and Lys150 each participate in a glycyl lysine isopeptide (Lys-Gly) (interchain with G-Cter in SUMO2) cross-link. A Glycyl lysine isopeptide (Lys-Gly) (interchain with G-Cter in SUMO); alternate cross-link involves residue Lys155. Lys155 is covalently cross-linked (Glycyl lysine isopeptide (Lys-Gly) (interchain with G-Cter in SUMO2); alternate). Glycyl lysine isopeptide (Lys-Gly) (interchain with G-Cter in SUMO2) cross-links involve residues Lys160 and Lys166. A Glycyl lysine isopeptide (Lys-Gly) (interchain with G-Cter in SUMO2); alternate cross-link involves residue Lys174. Lys174 carries the post-translational modification N6-acetyllysine; alternate. Residues 181–201 (KDKDKKVPEPDNKKKKPKKEE) are compositionally biased toward basic and acidic residues. Lys206 is covalently cross-linked (Glycyl lysine isopeptide (Lys-Gly) (interchain with G-Cter in SUMO2)). The residue at position 282 (Lys282) is an N6-acetyllysine. Lys338 participates in a covalent cross-link: Glycyl lysine isopeptide (Lys-Gly) (interchain with G-Cter in SUMO2). 2 interaction with DNA regions span residues 427–428 (KY) and 490–495 (RAGNEK). The 334-residue stretch at 434 to 767 (SSRIKGEKDW…IDMADEDYEF (334 aa)) folds into the Topo IB-type catalytic domain. Ser508 bears the Phosphoserine; by CK2 mark. Lys551 is covalently cross-linked (Glycyl lysine isopeptide (Lys-Gly) (interchain with G-Cter in SUMO2)). Residues 587–589 (TAK) are interaction with DNA. Residues Lys644, Lys702, and Lys714 each participate in a glycyl lysine isopeptide (Lys-Gly) (interchain with G-Cter in SUMO2) cross-link. Residue Tyr725 is the O-(3'-phospho-DNA)-tyrosine intermediate of the active site.

Belongs to the type IB topoisomerase family. In terms of assembly, monomer. Interacts with ERCC6. Interacts with TPRN; TPRN interacts with a number of DNA damage response proteins, is recruited to sites of DNA damage and may play a role in DNA damage repair. In terms of processing, sumoylated. Lys-119 is the main site of sumoylation. Sumoylation plays a role in partitioning TOP1 between nucleoli and nucleoplasm. Levels are dramatically increased on camptothecin (CPT) treatment. Phosphorylation at Ser-508 by CK2 increases binding to supercoiled DNA and sensitivity to camptothecin.

It localises to the nucleus. The protein resides in the nucleolus. It is found in the nucleoplasm. The catalysed reaction is ATP-independent breakage of single-stranded DNA, followed by passage and rejoining.. Its activity is regulated as follows. Specifically inhibited by camptothecin (CPT), a plant alkaloid with antitumor activity. Releases the supercoiling and torsional tension of DNA introduced during the DNA replication and transcription by transiently cleaving and rejoining one strand of the DNA duplex. Introduces a single-strand break via transesterification at a target site in duplex DNA. The scissile phosphodiester is attacked by the catalytic tyrosine of the enzyme, resulting in the formation of a DNA-(3'-phosphotyrosyl)-enzyme intermediate and the expulsion of a 5'-OH DNA strand. The free DNA strand then rotates around the intact phosphodiester bond on the opposing strand, thus removing DNA supercoils. Finally, in the religation step, the DNA 5'-OH attacks the covalent intermediate to expel the active-site tyrosine and restore the DNA phosphodiester backbone. Regulates the alternative splicing of tissue factor (F3) pre-mRNA in endothelial cells. Involved in the circadian transcription of the core circadian clock component BMAL1 by altering the chromatin structure around the ROR response elements (ROREs) on the BMAL1 promoter. This Chlorocebus aethiops (Green monkey) protein is DNA topoisomerase 1 (TOP1).